Here is a 78-residue protein sequence, read N- to C-terminus: Calcium/calmodulin-dependent protein kinase II inhibitor 1 (78 aa).

The CAMK2 inhibitory domain stretch occupies residues 41-68; the sequence is SKRPPKLGQIGRSKRVVIEDDRIDDVLK.

This sequence belongs to the CAMK2N family. As to quaternary structure, interacts with CAMK2B; the presence of Ca(2+)/calmodulin increases the interaction but is not essential. Interacts with CAMK2A; this interaction requires CAMK2A activation by Ca(2+). As to expression, expressed in the brain (at protein level). Expressed in cardiomyocytes but not cardiac fibroblasts (at protein level).

The protein localises to the synapse. The protein resides in the cell projection. It localises to the dendrite. It is found in the postsynaptic density. In terms of biological role, potent and specific inhibitor of CaM-kinase II (CAMK2). Plays a role in the maintenance of long-term retrieval-induced memory in response to contextual fear. Modulates blood pressure and vascular reactivity via regulation of CAMK2 activity in addition to regulation of left ventricular mass. Mediates the NLRP3 inflammasome in cardiomyocytes via acting as an inhibitor of the MAPK14/p38 and MAPK8/JNK pathways, thereby regulating ventricular remodeling and cardiac rhythm post-myocardial infarction. Negatively effects insulin sensitivity and promotes lipid formation in adipose tissues independent of CAMK2 signaling. The polypeptide is Calcium/calmodulin-dependent protein kinase II inhibitor 1 (Camk2n1) (Mus musculus (Mouse)).